Here is a 600-residue protein sequence, read N- to C-terminus: Aspartate--tRNA(Asp/Asn) ligase (600 aa).

Glu174 provides a ligand contact to L-aspartate. Residues 198-201 (QLFK) are aspartate. Arg220 contacts L-aspartate. Residues 220–222 (RDE) and Gln229 each bind ATP. L-aspartate is bound at residue His457. Glu491 provides a ligand contact to ATP. Arg498 is a binding site for L-aspartate. Residue 543–546 (GLDR) participates in ATP binding.

This sequence belongs to the class-II aminoacyl-tRNA synthetase family. Type 1 subfamily. In terms of assembly, homodimer.

The protein localises to the cytoplasm. The catalysed reaction is tRNA(Asx) + L-aspartate + ATP = L-aspartyl-tRNA(Asx) + AMP + diphosphate. Functionally, aspartyl-tRNA synthetase with relaxed tRNA specificity since it is able to aspartylate not only its cognate tRNA(Asp) but also tRNA(Asn). Reaction proceeds in two steps: L-aspartate is first activated by ATP to form Asp-AMP and then transferred to the acceptor end of tRNA(Asp/Asn). The sequence is that of Aspartate--tRNA(Asp/Asn) ligase from Burkholderia multivorans (strain ATCC 17616 / 249).